Here is a 904-residue protein sequence, read N- to C-terminus: DNA polymerase I (904 aa).

Residues 186–279 form the 5'-3' exonuclease domain; sequence TPRQYPDFAA…DTLRLQPWDR (94 aa). The 177-residue stretch at 317–493 folds into the 3'-5' exonuclease domain; sequence RGGALAPGTV…LADALDAELA (177 aa).

The protein belongs to the DNA polymerase type-A family. Single-chain monomer with multiple functions.

It carries out the reaction DNA(n) + a 2'-deoxyribonucleoside 5'-triphosphate = DNA(n+1) + diphosphate. Functionally, in addition to polymerase activity, this DNA polymerase exhibits 3'-5' and 5'-3' exonuclease activity. The chain is DNA polymerase I (polA) from Mycobacterium bovis (strain ATCC BAA-935 / AF2122/97).